The following is a 246-amino-acid chain: Protein SRL3 (246 aa).

Polar residues predominate over residues 49-61 (SISEAQDSPTSAP). Disordered regions lie at residues 49–68 (SISEAQDSPTSAPSPDGNED) and 200–229 (HAKSNRVDNVNVSPLRWSSHRRTQSTQENS). S212 bears the Phosphoserine mark.

Interacts with CLN2. In terms of processing, phosphorylated by CDC28, probably in association with G1 cyclin CLN2.

It localises to the cytoplasm. Weakly suppresses a RAD53 null mutation when overexpressed. This chain is Protein SRL3 (SRL3), found in Saccharomyces cerevisiae (strain ATCC 204508 / S288c) (Baker's yeast).